A 670-amino-acid chain; its full sequence is DNA ligase (670 aa).

Residues 35–39 (DSVYD), 84–85 (SL), and Glu116 contribute to the NAD(+) site. Lys118 acts as the N6-AMP-lysine intermediate in catalysis. Arg139, Glu176, Lys293, and Lys317 together coordinate NAD(+). The Zn(2+) site is built by Cys411, Cys414, Cys429, and Cys435. Positions 592–670 (VVKSEIAGKT…EEAFLKLLKS (79 aa)) constitute a BRCT domain.

Belongs to the NAD-dependent DNA ligase family. LigA subfamily. Mg(2+) is required as a cofactor. Mn(2+) serves as cofactor.

The enzyme catalyses NAD(+) + (deoxyribonucleotide)n-3'-hydroxyl + 5'-phospho-(deoxyribonucleotide)m = (deoxyribonucleotide)n+m + AMP + beta-nicotinamide D-nucleotide.. In terms of biological role, DNA ligase that catalyzes the formation of phosphodiester linkages between 5'-phosphoryl and 3'-hydroxyl groups in double-stranded DNA using NAD as a coenzyme and as the energy source for the reaction. It is essential for DNA replication and repair of damaged DNA. This chain is DNA ligase, found in Coxiella burnetii (strain Dugway 5J108-111).